Reading from the N-terminus, the 116-residue chain is Endocuticle structural glycoprotein ABD-4 (116 aa).

Q1 bears the Pyrrolidone carboxylic acid mark. Residues 20–92 form the Chitin-binding type R&amp;R domain; it reads DGSYQWNYET…PQGAHFPTPP (73 aa). The tract at residues 78 to 97 is disordered; that stretch reads ENGFVPQGAHFPTPPPIPPA. The O-linked (GalNAc) threonine; in ADB-4A, ABD-4B and ABD-4C glycan is linked to T90. O-linked (GalNAc) threonine; in ADB-4A and ABD-4B glycosylation is present at T107. An O-linked (GalNAc) threonine; in ADB-4A glycan is attached at T111. Position 116 is a proline amide (P116).

3 variants exists that arise from a sequential glycosylation with N-acetylgalactosamine at three (ABD-4A), two (ABD-4B) or one (ABD-4C) threonine residues.

In terms of biological role, component of the soft endocuticle of migratory locust. The protein is Endocuticle structural glycoprotein ABD-4 of Locusta migratoria (Migratory locust).